Here is a 457-residue protein sequence, read N- to C-terminus: Argininosuccinate lyase (457 aa).

This sequence belongs to the lyase 1 family. Argininosuccinate lyase subfamily.

The protein localises to the cytoplasm. The catalysed reaction is 2-(N(omega)-L-arginino)succinate = fumarate + L-arginine. It participates in amino-acid biosynthesis; L-arginine biosynthesis; L-arginine from L-ornithine and carbamoyl phosphate: step 3/3. The polypeptide is Argininosuccinate lyase (Pectobacterium atrosepticum (strain SCRI 1043 / ATCC BAA-672) (Erwinia carotovora subsp. atroseptica)).